Consider the following 289-residue polypeptide: Acetyl-coenzyme A carboxylase carboxyl transferase subunit beta 2 (289 aa).

The CoA carboxyltransferase N-terminal domain maps to 25–289 (VWTKCPSCDQ…TNTSIRLEVK (265 aa)). Zn(2+)-binding residues include Cys29, Cys32, Cys48, and Cys51. The segment at 29 to 51 (CPSCDQVLYRIALKENLEVCPKC) adopts a C4-type zinc-finger fold.

The protein belongs to the AccD/PCCB family. Acetyl-CoA carboxylase is a heterohexamer composed of biotin carboxyl carrier protein (AccB), biotin carboxylase (AccC) and two subunits each of ACCase subunit alpha (AccA) and ACCase subunit beta (AccD). Zn(2+) serves as cofactor.

The protein resides in the cytoplasm. It carries out the reaction N(6)-carboxybiotinyl-L-lysyl-[protein] + acetyl-CoA = N(6)-biotinyl-L-lysyl-[protein] + malonyl-CoA. Its pathway is lipid metabolism; malonyl-CoA biosynthesis; malonyl-CoA from acetyl-CoA: step 1/1. Functionally, component of the acetyl coenzyme A carboxylase (ACC) complex. Biotin carboxylase (BC) catalyzes the carboxylation of biotin on its carrier protein (BCCP) and then the CO(2) group is transferred by the transcarboxylase to acetyl-CoA to form malonyl-CoA. The chain is Acetyl-coenzyme A carboxylase carboxyl transferase subunit beta 2 from Vibrio parahaemolyticus serotype O3:K6 (strain RIMD 2210633).